Consider the following 327-residue polypeptide: Fructose import binding protein FruE (327 aa).

An N-terminal signal peptide occupies residues 1–22; sequence MKNWKKAIALVASAAALVSVAA. Cys-23 carries the N-palmitoyl cysteine lipid modification. The S-diacylglycerol cysteine moiety is linked to residue Cys-23.

This sequence belongs to the bacterial solute-binding protein 2 family. In terms of assembly, the complex is composed of an ATP-binding protein (FruK), two transmembrane proteins (FruF and FruG) and a solute-binding protein (FruE).

The protein localises to the cell membrane. Functionally, part of the high-affinity ABC transporter complex FruEKFG involved in fructose uptake. Can also transport ribose and xylose, with lower affinity. Binds fructose, ribose and xylose, with fructose as the preferred substrate. The protein is Fructose import binding protein FruE of Bifidobacterium longum (strain NCC 2705).